The primary structure comprises 943 residues: MTDYKATLNLPDTAFPMKAGLPQREPQILQRWDSIGLYGKLREIGKDRPKFVLHDGPPYANGKIHIGHALNKILKDMIVRSKTLSGFDAPYVPGWDCHGLPIEHKVEVTHGKHLTADRTRELCREYAAEQIEGQKTEFIRLGVLGDWDNPYKTMNFANEAGEIRALAEMVKQGFVFKGLKPVNWCFDCGSALAEAEVEYADKKSQTIDVAFPVADADKLAAAFGLSALAKPAAIVIWTTTPWTIPANQALNIHPDFKYALVDTGERLLVLAEELVESCLKRYNLEGSVIATAQGSALELINFRHPFYDRLSPIYLAEYVELGAGTGVVHSSPAYGEDDFVTCKRYGMVNEDILTPVQSNGVYVESLPFFGGQFIWKANPAIVDKLSEVGALMHTETISHSYMHCWRHKTPLIYRATAQWFVGMDKQPSTGEPLRERALKAIEETKFVPAWGQARLHSMIANRPDWCISRQRNWGVPIPFFLDKQTGELHPRTVELMEEVAKRVEQEGIEAWFKLDAQELLGDEAGQYDKITDTLDVWFDSGTTHWHVLRGSHDIGHATGPRADLYLEGSDQHRGWFHSSLLTGCAIDGHAPYRELLTHGFTVDENGRKMSKSLGNTIEPQKVNDTLGADILRLWVSATDYSGEMAVSEQILQRSADAYRRIRNTARFLLSNLSGFDPARDLLPAEDMLALDRWAVDRTLLLQRELEEHYSEYRFWNVYSKVHNFCVQELGGFYLDIIKDRQYTTGANSVARRSCQTALYHISEALVRWIAPILAFTADEIWQYLPGERNESVMLNTWYEGLSELPADAELDRAYWDRVMAVKAAVNKELENQRTAKVIGGNLQAEVTLFAEEGLTADLNKLGDELRFVLITSAASVVPFVQAPADAVTTEVEGLKLKVVKSGHAKCGRCWHFRADVGSHPEHPEICGRCVDNLNGSGEVRHYA.

The 'HIGH' region signature appears at 58–68; it reads PYANGKIHIGH. Glutamate 567 is a binding site for L-isoleucyl-5'-AMP. The short motif at 608–612 is the 'KMSKS' region element; sequence KMSKS. Lysine 611 contributes to the ATP binding site. Cysteine 906, cysteine 909, cysteine 926, and cysteine 929 together coordinate Zn(2+).

This sequence belongs to the class-I aminoacyl-tRNA synthetase family. IleS type 1 subfamily. In terms of assembly, monomer. Requires Zn(2+) as cofactor.

It is found in the cytoplasm. The catalysed reaction is tRNA(Ile) + L-isoleucine + ATP = L-isoleucyl-tRNA(Ile) + AMP + diphosphate. Functionally, catalyzes the attachment of isoleucine to tRNA(Ile). As IleRS can inadvertently accommodate and process structurally similar amino acids such as valine, to avoid such errors it has two additional distinct tRNA(Ile)-dependent editing activities. One activity is designated as 'pretransfer' editing and involves the hydrolysis of activated Val-AMP. The other activity is designated 'posttransfer' editing and involves deacylation of mischarged Val-tRNA(Ile). The protein is Isoleucine--tRNA ligase of Pseudomonas entomophila (strain L48).